Here is a 193-residue protein sequence, read N- to C-terminus: Xanthine phosphoribosyltransferase (193 aa).

The xanthine site is built by L20 and T27. 128 to 132 contacts 5-phospho-alpha-D-ribose 1-diphosphate; sequence ANGQA. K156 is a binding site for xanthine.

It belongs to the purine/pyrimidine phosphoribosyltransferase family. Xpt subfamily. As to quaternary structure, homodimer.

Its subcellular location is the cytoplasm. It carries out the reaction XMP + diphosphate = xanthine + 5-phospho-alpha-D-ribose 1-diphosphate. It functions in the pathway purine metabolism; XMP biosynthesis via salvage pathway; XMP from xanthine: step 1/1. Converts the preformed base xanthine, a product of nucleic acid breakdown, to xanthosine 5'-monophosphate (XMP), so it can be reused for RNA or DNA synthesis. The chain is Xanthine phosphoribosyltransferase from Streptococcus agalactiae serotype Ia (strain ATCC 27591 / A909 / CDC SS700).